Here is a 93-residue protein sequence, read N- to C-terminus: Chaperone NapD (93 aa).

Belongs to the NapD family. Interacts with the cytoplasmic NapA precursor.

Its subcellular location is the cytoplasm. In terms of biological role, chaperone for NapA, the catalytic subunit of the periplasmic nitrate reductase. It binds directly and specifically to the twin-arginine signal peptide of NapA, preventing premature interaction with the Tat translocase and premature export. This chain is Chaperone NapD, found in Haemophilus influenzae (strain ATCC 51907 / DSM 11121 / KW20 / Rd).